A 469-amino-acid polypeptide reads, in one-letter code: Probable glucuronoxylan glucuronosyltransferase F8H (469 aa).

Residues 1–36 (MSLDIKKPNITKTKKKKTGFVVKMQLNNNRGGNKRN) are Cytoplasmic-facing. A helical; Signal-anchor for type II membrane protein transmembrane segment spans residues 37–57 (IFIFFFFRNYYTWILWFCLSL). The Lumenal segment spans residues 58 to 469 (YFFTSYFSVE…RVLSQREVDM (412 aa)). N-linked (GlcNAc...) asparagine glycans are attached at residues Asn-171, Asn-203, Asn-301, and Asn-411.

It belongs to the glycosyltransferase 47 family. As to expression, expressed in xylem cells in stems and in roots.

Its subcellular location is the golgi apparatus membrane. In terms of biological role, involved in the synthesis of the hemicellulose glucuronoxylan, a major component of secondary cell walls. Probably involved in the synthesis of the glycosyl sequence at the glucuronoxylan reducing end. The polypeptide is Probable glucuronoxylan glucuronosyltransferase F8H (F8H) (Arabidopsis thaliana (Mouse-ear cress)).